A 396-amino-acid polypeptide reads, in one-letter code: Elongation factor Tu (396 aa).

Residues 10–205 (KTHANIGTIG…AVDEYIPTPE (196 aa)) form the tr-type G domain. Positions 19 to 26 (GHVDHGKT) are G1. A GTP-binding site is contributed by 19-26 (GHVDHGKT). Residue Thr26 coordinates Mg(2+). The tract at residues 61–65 (GITIS) is G2. Positions 82–85 (DCPG) are G3. GTP-binding positions include 82–86 (DCPGH) and 137–140 (NKCD). Residues 137-140 (NKCD) form a G4 region. The G5 stretch occupies residues 175–177 (SAL).

This sequence belongs to the TRAFAC class translation factor GTPase superfamily. Classic translation factor GTPase family. EF-Tu/EF-1A subfamily. Monomer.

Its subcellular location is the cytoplasm. It carries out the reaction GTP + H2O = GDP + phosphate + H(+). Functionally, GTP hydrolase that promotes the GTP-dependent binding of aminoacyl-tRNA to the A-site of ribosomes during protein biosynthesis. The polypeptide is Elongation factor Tu (Shouchella clausii (strain KSM-K16) (Alkalihalobacillus clausii)).